Here is a 451-residue protein sequence, read N- to C-terminus: Exodeoxyribonuclease 7 large subunit (451 aa).

The protein belongs to the XseA family. As to quaternary structure, heterooligomer composed of large and small subunits.

The protein localises to the cytoplasm. The catalysed reaction is Exonucleolytic cleavage in either 5'- to 3'- or 3'- to 5'-direction to yield nucleoside 5'-phosphates.. Bidirectionally degrades single-stranded DNA into large acid-insoluble oligonucleotides, which are then degraded further into small acid-soluble oligonucleotides. In Neisseria meningitidis serogroup C / serotype 2a (strain ATCC 700532 / DSM 15464 / FAM18), this protein is Exodeoxyribonuclease 7 large subunit.